The following is a 338-amino-acid chain: Anthranilate phosphoribosyltransferase (338 aa).

5-phospho-alpha-D-ribose 1-diphosphate contacts are provided by residues glycine 81, 84 to 85 (GD), serine 89, 91 to 94 (NVST), 109 to 117 (KHGNRALSS), and alanine 121. An anthranilate-binding site is contributed by glycine 81. A Mg(2+)-binding site is contributed by serine 93. An anthranilate-binding site is contributed by asparagine 112. Arginine 167 contributes to the anthranilate binding site. Positions 226 and 227 each coordinate Mg(2+).

Belongs to the anthranilate phosphoribosyltransferase family. As to quaternary structure, homodimer. It depends on Mg(2+) as a cofactor.

It catalyses the reaction N-(5-phospho-beta-D-ribosyl)anthranilate + diphosphate = 5-phospho-alpha-D-ribose 1-diphosphate + anthranilate. It participates in amino-acid biosynthesis; L-tryptophan biosynthesis; L-tryptophan from chorismate: step 2/5. Functionally, catalyzes the transfer of the phosphoribosyl group of 5-phosphorylribose-1-pyrophosphate (PRPP) to anthranilate to yield N-(5'-phosphoribosyl)-anthranilate (PRA). This chain is Anthranilate phosphoribosyltransferase, found in Rhodopseudomonas palustris (strain TIE-1).